A 388-amino-acid chain; its full sequence is Ectopic P granules protein 6 (388 aa).

Residues 1–25 show a composition bias toward basic and acidic residues; that stretch reads MSKKEETIFFRIEKENRPESSKKEE. A disordered region spans residues 1–33; sequence MSKKEETIFFRIEKENRPESSKKEEDENSTEEM. One copy of the WD 1 repeat lies at 217-257; that stretch reads AHLTDIAQVALNCQGTLVATGSTKGTVIRVFDARTKGPLYE. Positions 258–261 match the LRRG motif motif; the sequence is LRRG. Residues 262-301 form a WD 2 repeat; the sequence is TVQAHLQCMAFSPCSSYLAVASDKGTLHMFGIRDAEPQKK. A required for atg-2 binding region spans residues 265 to 328; it reads AHLQCMAFSP…LDRPVMAIGF (64 aa).

Belongs to the WD repeat PROPPIN family. In terms of assembly, interacts with atg-2; the interaction is direct. Widely expressed in tissues including pharyngeal, muscle and neuronal tissues.

It localises to the cytoplasm. It is found in the preautophagosomal structure membrane. Its function is as follows. Component of the epg-6/atg-2 complex, which is involved in the generation of autophagosomes from omegasomes and in the distribution of atg-9 and atg-13 during the autophagy-mediated degradation of protein aggregates. Binds to phosphatidylinositols on preautophagosomes, which are early autophagic structures, to promote autophagosome formation. In particular, binds with high affinity to phosphatidylinositols including phosphatidylinositol 3-phosphate (PtdIns(3)P) and phosphatidylinositol 5-phosphate (PtdIns(5)P), but more weakly to phosphatidylinositol 4-phosphate (PtdIns(4)P) and phosphatidylinositol 3,5-bisphosphate (PtdIns(3,5)P2). Involved in autophagy-mediated degradation of ribosomal RNA and ribosomal proteins in lysosomes, which is essential for maintaining nucleotide homeostasis. This Caenorhabditis elegans protein is Ectopic P granules protein 6.